The following is a 204-amino-acid chain: dITP/XTP pyrophosphatase (204 aa).

Residue 8-13 coordinates substrate; the sequence is SNNAHK. Residues glutamate 41 and aspartate 76 each coordinate Mg(2+). The Proton acceptor role is filled by aspartate 76. Substrate is bound by residues serine 77, 159–162, lysine 182, and 187–188; these read FGYD and HR.

Belongs to the HAM1 NTPase family. As to quaternary structure, homodimer. It depends on Mg(2+) as a cofactor.

It catalyses the reaction XTP + H2O = XMP + diphosphate + H(+). The catalysed reaction is dITP + H2O = dIMP + diphosphate + H(+). It carries out the reaction ITP + H2O = IMP + diphosphate + H(+). In terms of biological role, pyrophosphatase that catalyzes the hydrolysis of nucleoside triphosphates to their monophosphate derivatives, with a high preference for the non-canonical purine nucleotides XTP (xanthosine triphosphate), dITP (deoxyinosine triphosphate) and ITP. Seems to function as a house-cleaning enzyme that removes non-canonical purine nucleotides from the nucleotide pool, thus preventing their incorporation into DNA/RNA and avoiding chromosomal lesions. This chain is dITP/XTP pyrophosphatase, found in Clostridium perfringens (strain 13 / Type A).